A 157-amino-acid chain; its full sequence is Fimbrial protein Q (157 aa).

A propeptide spanning residues 1-6 (MNAQKG) is cleaved from the precursor. N-methylphenylalanine is present on Phe7. A disulfide bridge connects residues Cys136 and Cys155.

This sequence belongs to the N-Me-Phe pilin family. The pili are polar flexible filaments of about 5.4 nanometers diameter and 2.5 micrometers average length; they consist of only a single polypeptide chain arranged in a helical configuration of five subunits per turn in the assembled pilus.

It is found in the fimbrium. The sequence is that of Fimbrial protein Q (tfpQ) from Moraxella bovis.